Consider the following 194-residue polypeptide: Phosphoheptose isomerase (194 aa).

The SIS domain maps to 37-194 (ISDSFKQGGK…LIEFEMAKDV (158 aa)). 52–54 (NGG) contributes to the substrate binding site. Zn(2+) contacts are provided by H61 and E65. Substrate is bound by residues E65, 93 to 94 (ND), 119 to 121 (STS), S124, and Q172. Positions 172 and 180 each coordinate Zn(2+).

Belongs to the SIS family. GmhA subfamily. As to quaternary structure, homotetramer. Requires Zn(2+) as cofactor.

Its subcellular location is the cytoplasm. It catalyses the reaction 2 D-sedoheptulose 7-phosphate = D-glycero-alpha-D-manno-heptose 7-phosphate + D-glycero-beta-D-manno-heptose 7-phosphate. The protein operates within carbohydrate biosynthesis; D-glycero-D-manno-heptose 7-phosphate biosynthesis; D-glycero-alpha-D-manno-heptose 7-phosphate and D-glycero-beta-D-manno-heptose 7-phosphate from sedoheptulose 7-phosphate: step 1/1. Functionally, catalyzes the isomerization of sedoheptulose 7-phosphate in D-glycero-D-manno-heptose 7-phosphate. The sequence is that of Phosphoheptose isomerase from Actinobacillus succinogenes (strain ATCC 55618 / DSM 22257 / CCUG 43843 / 130Z).